A 275-amino-acid chain; its full sequence is 2-dehydro-3-deoxyphosphooctonate aldolase (275 aa).

Belongs to the KdsA family.

It is found in the cytoplasm. It carries out the reaction D-arabinose 5-phosphate + phosphoenolpyruvate + H2O = 3-deoxy-alpha-D-manno-2-octulosonate-8-phosphate + phosphate. It participates in carbohydrate biosynthesis; 3-deoxy-D-manno-octulosonate biosynthesis; 3-deoxy-D-manno-octulosonate from D-ribulose 5-phosphate: step 2/3. Its pathway is bacterial outer membrane biogenesis; lipopolysaccharide biosynthesis. In Francisella philomiragia subsp. philomiragia (strain ATCC 25017 / CCUG 19701 / FSC 153 / O#319-036), this protein is 2-dehydro-3-deoxyphosphooctonate aldolase.